We begin with the raw amino-acid sequence, 328 residues long: Putative P2Y purinoceptor 10 (328 aa).

Residues 1–27 lie on the Extracellular side of the membrane; that stretch reads MGSNSTSSAESNCNATYLPFQYSLYAT. Residues N4 and N14 are each glycosylated (N-linked (GlcNAc...) asparagine). Residues 28 to 48 traverse the membrane as a helical segment; the sequence is TYIFIFIPGLLANSAALWVLC. At 49 to 56 the chain is on the cytoplasmic side; sequence RFISKKNK. A helical membrane pass occupies residues 57–77; sequence AIIFMINLSVADLAHILSLPL. Over 78-91 the chain is Extracellular; it reads RIYYYINRHWPFQR. Residues 92–112 traverse the membrane as a helical segment; it reads ALCLLCFYLKYLNMYASIFFL. Cysteines 94 and 170 form a disulfide. Residues 113–137 lie on the Cytoplasmic side of the membrane; that stretch reads TCISLQRCLFLLKPFRARNWKRRYD. A helical membrane pass occupies residues 138 to 158; the sequence is VGISAVIWIVVGTACLPFPIL. At 159–182 the chain is on the extracellular side; it reads RNAGLANSTDSCFADLGYKQMDAV. A helical transmembrane segment spans residues 183 to 203; that stretch reads VLVTMVVIAELAGFVIPVITI. Residues 204–233 are Cytoplasmic-facing; the sequence is ACCTWKTTVSLKHPPIAFQGISERKKALRM. A helical membrane pass occupies residues 234–254; it reads VFMCAAVFVICFTPYHINFIF. Residues 255-277 lie on the Extracellular side of the membrane; it reads YTMVKESIITSCPTVKSTLYFHP. A helical transmembrane segment spans residues 278 to 298; the sequence is FSLCLASLCCLLDPILYYFMA. The Cytoplasmic portion of the chain corresponds to 299–328; it reads SEFRDQLSRHGSSVTRSRLMSRESGSSMVN.

This sequence belongs to the G-protein coupled receptor 1 family.

The protein localises to the cell membrane. In terms of biological role, putative receptor for purines coupled to G-proteins. In Mus musculus (Mouse), this protein is Putative P2Y purinoceptor 10 (P2ry10).